Consider the following 396-residue polypeptide: Putative F-box/kelch-repeat protein At3g17540 (396 aa).

Residues 4–50 (TMVISDLPHEIESEILSRVPTKSLAKLHTTCKRWYALFRDPRFVKKN) enclose the F-box domain. Kelch repeat units follow at residues 163–209 (LRYC…GMSL), 253–299 (VLSI…FLAV), and 338–386 (RIYI…KRKG).

The polypeptide is Putative F-box/kelch-repeat protein At3g17540 (Arabidopsis thaliana (Mouse-ear cress)).